Reading from the N-terminus, the 396-residue chain is Elongation factor Tu (396 aa).

A tr-type G domain is found at 10 to 206 (KPHCNIGTIG…TVDAYIPQPE (197 aa)). The interval 19–26 (GHVDHGKT) is G1. Position 19–26 (19–26 (GHVDHGKT)) interacts with GTP. Thr26 lines the Mg(2+) pocket. The segment at 60 to 64 (GITIS) is G2. Positions 81–84 (DCPG) are G3. Residues 81–85 (DCPGH) and 136–139 (NKVD) each bind GTP. Positions 136–139 (NKVD) are G4. A G5 region spans residues 174 to 176 (SAL).

It belongs to the TRAFAC class translation factor GTPase superfamily. Classic translation factor GTPase family. EF-Tu/EF-1A subfamily. In terms of assembly, monomer.

Its subcellular location is the cytoplasm. It carries out the reaction GTP + H2O = GDP + phosphate + H(+). In terms of biological role, GTP hydrolase that promotes the GTP-dependent binding of aminoacyl-tRNA to the A-site of ribosomes during protein biosynthesis. The chain is Elongation factor Tu from Methylocella silvestris (strain DSM 15510 / CIP 108128 / LMG 27833 / NCIMB 13906 / BL2).